The primary structure comprises 1212 residues: uncharacterized protein (1212 aa).

Residues methionine 1–tyrosine 31 are compositionally biased toward polar residues. Disordered stretches follow at residues methionine 1–glutamine 70, proline 119–asparagine 169, serine 211–asparagine 231, isoleucine 248–lysine 374, glutamine 655–glutamine 681, asparagine 935–alanine 957, and glutamine 973–glutamine 1125. Low complexity-rich tracts occupy residues proline 48–glutamine 70 and proline 119–asparagine 163. Over residues asparagine 256–asparagine 275 the composition is skewed to low complexity. 2 stretches are compositionally biased toward polar residues: residues lysine 276 to serine 285 and tyrosine 292 to proline 317. Low complexity predominate over residues isoleucine 322–glutamine 340. Residues threonine 341–histidine 351 show a composition bias toward polar residues. A compositionally biased stretch (low complexity) spans asparagine 352 to asparagine 373. 2 stretches are compositionally biased toward low complexity: residues asparagine 998–asparagine 1022 and glutamine 1037–glutamine 1125.

This is an uncharacterized protein from Dictyostelium discoideum (Social amoeba).